Consider the following 735-residue polypeptide: Protein argonaute (735 aa).

The segment at 1-94 (MDLLSNLRRS…LVQMGTKQLD (94 aa)) is N-terminal domain. A linker L1 region spans residues 95 to 180 (CRNDAHRCAL…IDIHHRFYTP (86 aa)). The interval 181–284 (WTVHQWLEQY…SPSLTMEMLA (104 aa)) is PAZ domain. Positions 285 to 369 (KVAEDSTVCD…SKTADIRNKG (85 aa)) are linker L2. The mid domain stretch occupies residues 370 to 498 (CAKIGETSFG…LLCKAGWQPI (129 aa)). The interval 499 to 735 (QLESVDHPEV…NISRDKLIAV (237 aa)) is PIWI domain. Residues Asp-516, Glu-550, Asp-584, and Asp-709 contribute to the active site. Residue Asp-516 participates in Mn(2+) binding. 3 residues coordinate Mn(2+): Asp-584, Asp-709, and Val-735.

It belongs to the argonaute family. Long pAgo subfamily. As to quaternary structure, copurifies with SSB proteins Synpcc7942_0079 and Synpcc7942_0301 as well as other proteins. The cofactor is Mn(2+).

In terms of biological role, a DNA-guided ssDNA endonuclease that might play a role in defense against invading mobile genetic elements. Uses short ssDNA sequences as guides (gDNA) to bind complementary target strands, resulting in cleavage of the target DNA (tDNA). The cleavage site is 10 nucleotides (nt) downstream of the target residue base-paired with the 5'-end of the gDNA. Both 5'-P and 5'-OH gDNAs confer activity; a 5'-OH guide cleaves between nt 10-11 and nt 11-12. Guide DNA mismatches in the seed (nt 2-9) can enhance activity, mismatches 1-5 nt after the cleavage site block activity. Has no appreciable activity with guide RNA or on target RNA. In situ binds to 5'-phosphorylated DNA 14-20 nt in length; small DNA maps over the chromosome and plasmid with some preference for the replication origin and the probable termination site. Also has weak guide-independent nuclease activity on DNA called 'chopping'. Overexpression of wild-type or catalytically inactive mutant has no visible effect during growth under continuous high light for up to a month. In Synechococcus elongatus (strain ATCC 33912 / PCC 7942 / FACHB-805) (Anacystis nidulans R2), this protein is Protein argonaute.